We begin with the raw amino-acid sequence, 57 residues long: Large ribosomal subunit protein bL32c (57 aa).

This sequence belongs to the bacterial ribosomal protein bL32 family.

It localises to the plastid. The protein resides in the chloroplast. The chain is Large ribosomal subunit protein bL32c from Nandina domestica (Heavenly bamboo).